We begin with the raw amino-acid sequence, 213 residues long: Flagellar transcriptional regulator FlhC (213 aa).

The Zn(2+) site is built by C138, C141, C158, and C161.

It belongs to the FlhC family. Heterohexamer composed of two FlhC and four FlhD subunits. Each FlhC binds a FlhD dimer, forming a heterotrimer, and a hexamer assembles by dimerization of two heterotrimers. Requires Zn(2+) as cofactor.

It localises to the cytoplasm. Functions in complex with FlhD as a master transcriptional regulator that regulates transcription of several flagellar and non-flagellar operons by binding to their promoter region. Activates expression of class 2 flagellar genes, including fliA, which is a flagellum-specific sigma factor that turns on the class 3 genes. Also regulates genes whose products function in a variety of physiological pathways. This chain is Flagellar transcriptional regulator FlhC, found in Cupriavidus metallidurans (strain ATCC 43123 / DSM 2839 / NBRC 102507 / CH34) (Ralstonia metallidurans).